Here is an 884-residue protein sequence, read N- to C-terminus: MDLEANCKEKLSYFRIKELKDVLTQLGLSKQGKKQELVDRILTLLSDEQAARLLSKKNTVAKEAVAKLVDDTYRKMQVSGASDLASKGQVSSDTSNLKVKGEPEDPFQPEIKVRCVCGNSLETDSMIQCEDPRCHVWQHVGCVILPDKPMDGNPPLPESFYCEICRLTRADPFWVTVAHPLSPVRLTATTIPNDGASTMQSVERTFQITRADKDLLAKPEYDVQAWCMLLNDKVLFRMQWPQYADLQVNGVPVRAINRPGGQLLGVNGRDDGPIITSCIRDGVNRISLSGGDVRIFCFGVRLVKRRTLQQVLNLIPEEGKGETFEDALARVRRCIGGGGGDDNADSDSDIEVVADFFGVNLRCPMSGSRIKVAGRFLPCVHMGCFDLDVFVELNQRSRKWQCPICLKNYSVEHVIVDPYFNRITSKMKHCDEEVTEIEVKPDGSWRVKFKRESERRELGELSQWHAPDGSLCPSAVDIKRKMEMLPVKQEGYSDGPAPLKLGIRKNRNGIWEVSKPNTNGLSSSNRQEKVGYQEKNIIPMSSSATGSGRDGDDASVNQDAIGTFDFVANGMELDSISMNVDSGYNFPDRNQSGEGGNNEVIVLSDSDDENDLVITPGPAYSGCQTDGGLTFPLNPPGIINSYNEDPHSIAGGSSGLGLFNDDDEFDTPLWSFPSETPEAPGFQLFRSDADVSGGLVGLHHHSPLNCSPEINGGYTMAPETSMASVPVVPGSTGRSEANDGLVDNPLAFGRDDPSLQIFLPTKPDASAQSGFKNQADMSNGLRSEDWISLRLGDSASGNHGDPATTNGINSSHQMSTREGSMDTTTETASLLLGMNDSRQDKAKKQRSDNPFSFPRQKRSNNEQDHQTRHRSLNKICIILCAGKN.

One can recognise an SAP domain in the interval L11–L45. Residues L84–P103 form a disordered region. A compositionally biased stretch (polar residues) spans G88–L97. K100 participates in a covalent cross-link: Glycyl lysine isopeptide (Lys-Gly) (interchain with G-Cter in SUMO). The PHD-type zinc finger occupies K112–T168. An SP-RING-type zinc finger spans residues S346 to H429. The Zn(2+) site is built by C379, H381, C402, and C405. A Glycyl lysine isopeptide (Lys-Gly) (interchain with G-Cter in SUMO) cross-link involves residue K488. Disordered stretches follow at residues P753–S778, G792–T824, and D836–H869. Composition is skewed to polar residues over residues S766 to S778 and A803 to T824. A compositionally biased stretch (basic and acidic residues) spans S837–S847.

Belongs to the PIAS family. Interacts (via PHD domain) with SCE1, GTE3 and GTE5. Autosumoylated at Lys-100 and Lys-488. Ubiquitous.

Its subcellular location is the nucleus speckle. It participates in protein modification; protein sumoylation. Functionally, E3 SUMO protein ligase involved in regulation processes. Mediates SUMO/ attachment to PHR1, a MYB transcriptional activator controlling the phosphate deficiency responses. Functions as an upstream negative regulator of salicylic acid (SA) accumulation and subsequent SA-mediated systemic acquired resistance (SAR) signaling. Probably not involved in jasmonic acid (JA)-mediated defense response. Participates in abiotic stress-induced sumoylation. Controls heat shock-induced SUMO1 and SUMO2 conjugation and facilitates basal thermotolerance. Involved in freezing tolerance by mediating sumoylation of ICE1, a transcription activator of the cold signaling regulator CBF3/DREB1A. Acts as a positive regulator of drought stress tolerance. Acts as a floral repressor that promotes FLC expression by repressing FLD activity through sumoylation. Acts as a negative regulator of abscisic acid (ABA) signaling through ABI5 sumoylation. Mediates sumoylation of SCE1, GTE3 and GTE5. Functions as a negative regulator of SnRK1 signaling through sumoylation of several components of the SnRK1 complex. This is E3 SUMO-protein ligase SIZ1 from Arabidopsis thaliana (Mouse-ear cress).